We begin with the raw amino-acid sequence, 293 residues long: MLKGSITALVTPFDREGAFDEKAFRAFVNWQIEEGTKGLVPVGTTGETPTLSHDEHKRVIEVCIEVAAGRVPVIAGAGSNNTVEAIELAQHAEKAGADAVLVVTPYYNKPNQRGLYEHFSRVARSISIPLVIYNIPGRSIIDMTPETMGALVRDCKNIVGVKDATGKIERVSEQRAICGKEFIQLSGEDATALGFNAHGGVGCISVTSNIAPRLCAEFQEACQAGNFAKALELQDRLMPLHKALFLEPNPSGPKYALSRLGRIENVLRSPMVTIEAATAEKIDHAMKHAVLIN.

Pyruvate is bound at residue threonine 45. The active-site Proton donor/acceptor is tyrosine 133. The active-site Schiff-base intermediate with substrate is the lysine 162. Isoleucine 204 contacts pyruvate.

Belongs to the DapA family. In terms of assembly, homotetramer; dimer of dimers.

Its subcellular location is the cytoplasm. The catalysed reaction is L-aspartate 4-semialdehyde + pyruvate = (2S,4S)-4-hydroxy-2,3,4,5-tetrahydrodipicolinate + H2O + H(+). It functions in the pathway amino-acid biosynthesis; L-lysine biosynthesis via DAP pathway; (S)-tetrahydrodipicolinate from L-aspartate: step 3/4. In terms of biological role, catalyzes the condensation of (S)-aspartate-beta-semialdehyde [(S)-ASA] and pyruvate to 4-hydroxy-tetrahydrodipicolinate (HTPA). In Brucella abortus biovar 1 (strain 9-941), this protein is 4-hydroxy-tetrahydrodipicolinate synthase.